A 365-amino-acid chain; its full sequence is Cobalt-precorrin-5B C(1)-methyltransferase (365 aa).

The protein belongs to the CbiD family.

It carries out the reaction Co-precorrin-5B + S-adenosyl-L-methionine = Co-precorrin-6A + S-adenosyl-L-homocysteine. Its pathway is cofactor biosynthesis; adenosylcobalamin biosynthesis; cob(II)yrinate a,c-diamide from sirohydrochlorin (anaerobic route): step 6/10. In terms of biological role, catalyzes the methylation of C-1 in cobalt-precorrin-5B to form cobalt-precorrin-6A. This chain is Cobalt-precorrin-5B C(1)-methyltransferase, found in Methanococcus maripaludis (strain DSM 14266 / JCM 13030 / NBRC 101832 / S2 / LL).